Consider the following 322-residue polypeptide: Sideroflexin-2 (322 aa).

An N-acetylmethionine modification is found at M1. Transmembrane regions (helical) follow at residues 99-119, 147-167, 174-194, 223-243, and 266-286; these read GMLITGFMLQFYRTMPAVIFW, ALSYFTATTTAVATAVGMNMW, LVGRWVPFAAVAAANCVNIPM, VGIAQVVISRITMAAPGMILL, and LQVLLCGCFLLFMVPVACGLF.

Belongs to the sideroflexin family. Expressed in brain, heart, kidney, spleen, thymus, liver, stomach and skin.

Its subcellular location is the mitochondrion inner membrane. It localises to the mitochondrion outer membrane. It carries out the reaction L-serine(in) = L-serine(out). Its function is as follows. Mitochondrial amino-acid transporter that mediates transport of serine into mitochondria. Involved in mitochondrial iron homeostasis by regulating heme biosynthesis. The chain is Sideroflexin-2 from Mus musculus (Mouse).